We begin with the raw amino-acid sequence, 191 residues long: FAD-linked sulfhydryl oxidase ERV1 (191 aa).

One can recognise an ERV/ALR sulfhydryl oxidase domain in the interval 72–172 (GPVTKEDLGR…FPCERVDARW (101 aa)). The FAD site is built by K76, R81, W84, E121, H125, C148, H151, N152, N155, K160, and R171. C119 and C122 form a disulfide bridge. A disulfide bridge links C148 with C165. Cysteines 177 and 182 form a disulfide. The short motif at 177 to 182 (CEQKSC) is the Required for dimerization and substrate specificity element.

As to quaternary structure, homodimer. FAD serves as cofactor. Contains three disulfide bonds; one catalytic disulfide (Cys-119 to Cys-122), one structural disulfide (Cys-148 to Cys-165), and one shuttle disulfide (Cys-177 to Cys-182).

The protein resides in the mitochondrion. The enzyme catalyses 2 R'C(R)SH + O2 = R'C(R)S-S(R)CR' + H2O2. FAD-dependent sulfhydryl oxidase that catalyzes disulfide bond formation. Oxidizes thioredoxin in vitro. Required for the import and folding of small cysteine-containing proteins in the mitochondrial intermembrane space, and can act independently of the oxidoreductase MIA40. Can oxidize the cytochrome c oxidase assembly protein COX19, a typical substrate of MIA40. This chain is FAD-linked sulfhydryl oxidase ERV1 (ERV1), found in Arabidopsis thaliana (Mouse-ear cress).